The sequence spans 358 residues: Protein-glutamate methylesterase/protein-glutamine glutaminase 1 (358 aa).

The 118-residue stretch at 8 to 125 (RVLIVDDSAV…ARGLEGYAEE (118 aa)) folds into the Response regulatory domain. Asp59 bears the 4-aspartylphosphate mark. One can recognise a CheB-type methylesterase domain in the interval 165-352 (FRTTDRLIAI…LDRVAERLLA (188 aa)). Residues Ser177, His203, and Asp299 contribute to the active site.

The protein belongs to the CheB family. In terms of processing, phosphorylated by CheA. Phosphorylation of the N-terminal regulatory domain activates the methylesterase activity.

The protein localises to the cytoplasm. The enzyme catalyses [protein]-L-glutamate 5-O-methyl ester + H2O = L-glutamyl-[protein] + methanol + H(+). The catalysed reaction is L-glutaminyl-[protein] + H2O = L-glutamyl-[protein] + NH4(+). Its function is as follows. Involved in chemotaxis. Part of a chemotaxis signal transduction system that modulates chemotaxis in response to various stimuli. Catalyzes the demethylation of specific methylglutamate residues introduced into the chemoreceptors (methyl-accepting chemotaxis proteins or MCP) by CheR. Also mediates the irreversible deamidation of specific glutamine residues to glutamic acid. The sequence is that of Protein-glutamate methylesterase/protein-glutamine glutaminase 1 from Xanthomonas axonopodis pv. citri (strain 306).